The chain runs to 198 residues: V-type ATP synthase subunit E 1 (198 aa).

This sequence belongs to the V-ATPase E subunit family.

Produces ATP from ADP in the presence of a proton gradient across the membrane. This chain is V-type ATP synthase subunit E 1, found in Clostridium tetani (strain Massachusetts / E88).